Consider the following 213-residue polypeptide: Ribosomal RNA small subunit methyltransferase G (213 aa).

S-adenosyl-L-methionine-binding positions include Gly-77, Met-82, 104–106 (EKS), and Arg-145.

Belongs to the methyltransferase superfamily. RNA methyltransferase RsmG family.

The protein resides in the cytoplasm. It catalyses the reaction guanosine(527) in 16S rRNA + S-adenosyl-L-methionine = N(7)-methylguanosine(527) in 16S rRNA + S-adenosyl-L-homocysteine. Specifically methylates the N7 position of guanine in position 527 of 16S rRNA. This is Ribosomal RNA small subunit methyltransferase G from Pelagibacter ubique (strain HTCC1062).